Reading from the N-terminus, the 304-residue chain is Oxygen-dependent coproporphyrinogen-III oxidase (304 aa).

Position 94 (serine 94) interacts with substrate. A divalent metal cation-binding residues include histidine 98 and histidine 108. The Proton donor role is filled by histidine 108. A substrate-binding site is contributed by 110–112 (NVR). 2 residues coordinate a divalent metal cation: histidine 147 and histidine 177. Positions 242 to 277 (YVEFNLVYDRGTLFGLQTGGRTESILMSMPPLVRWQ) are important for dimerization. Residue 260-262 (GGR) coordinates substrate.

This sequence belongs to the aerobic coproporphyrinogen-III oxidase family. In terms of assembly, homodimer. A divalent metal cation serves as cofactor.

It is found in the cytoplasm. The enzyme catalyses coproporphyrinogen III + O2 + 2 H(+) = protoporphyrinogen IX + 2 CO2 + 2 H2O. It functions in the pathway porphyrin-containing compound metabolism; protoporphyrin-IX biosynthesis; protoporphyrinogen-IX from coproporphyrinogen-III (O2 route): step 1/1. In terms of biological role, involved in the heme biosynthesis. Catalyzes the aerobic oxidative decarboxylation of propionate groups of rings A and B of coproporphyrinogen-III to yield the vinyl groups in protoporphyrinogen-IX. This is Oxygen-dependent coproporphyrinogen-III oxidase from Shewanella amazonensis (strain ATCC BAA-1098 / SB2B).